The primary structure comprises 251 residues: Protein PBMUCL2 (251 aa).

The N-terminal stretch at 1 to 22 (MPRYVPLLLLLLLLRCSERGGG) is a signal peptide. Disordered stretches follow at residues 36-55 (WRDGVRVPGEGASWDSDRAS) and 65-251 (LSQS…THLL). Over residues 72–87 (KHPETSPKDSRIREND) the composition is skewed to basic and acidic residues. The N-linked (GlcNAc...) asparagine glycan is linked to N120. Over residues 150–164 (TKDSVTADPGTTENF) the composition is skewed to polar residues. Positions 153–251 (SVTADPGTTE…TTKHGDTHLL (99 aa)) are 15 X 11 AA approximate repeats. Over residues 241–251 (ETTKHGDTHLL) the composition is skewed to basic and acidic residues.

In terms of tissue distribution, detected in the brain, lung, spleen, thymus and prostate.

The protein localises to the secreted. The chain is Protein PBMUCL2 (HCG22) from Homo sapiens (Human).